The sequence spans 809 residues: Phenylalanine--tRNA ligase beta subunit (809 aa).

The 116-residue stretch at 39–154 (APPTSKIVVG…EDTPVGQDIR (116 aa)) folds into the tRNA-binding domain. The B5 domain occupies 405–480 (PQRAPVKMRV…RIYGFEKIPA (76 aa)). Positions 458, 464, 467, and 468 each coordinate Mg(2+). Residues 707–808 (SKFPPVRRDI…RMARAGARLR (102 aa)) enclose the FDX-ACB domain.

This sequence belongs to the phenylalanyl-tRNA synthetase beta subunit family. Type 1 subfamily. Tetramer of two alpha and two beta subunits. Mg(2+) is required as a cofactor.

The protein resides in the cytoplasm. It catalyses the reaction tRNA(Phe) + L-phenylalanine + ATP = L-phenylalanyl-tRNA(Phe) + AMP + diphosphate + H(+). This chain is Phenylalanine--tRNA ligase beta subunit, found in Burkholderia lata (strain ATCC 17760 / DSM 23089 / LMG 22485 / NCIMB 9086 / R18194 / 383).